The sequence spans 582 residues: Proline--tRNA ligase (582 aa).

It belongs to the class-II aminoacyl-tRNA synthetase family. ProS type 1 subfamily. Homodimer.

The protein localises to the cytoplasm. The enzyme catalyses tRNA(Pro) + L-proline + ATP = L-prolyl-tRNA(Pro) + AMP + diphosphate. Functionally, catalyzes the attachment of proline to tRNA(Pro) in a two-step reaction: proline is first activated by ATP to form Pro-AMP and then transferred to the acceptor end of tRNA(Pro). As ProRS can inadvertently accommodate and process non-cognate amino acids such as alanine and cysteine, to avoid such errors it has two additional distinct editing activities against alanine. One activity is designated as 'pretransfer' editing and involves the tRNA(Pro)-independent hydrolysis of activated Ala-AMP. The other activity is designated 'posttransfer' editing and involves deacylation of mischarged Ala-tRNA(Pro). The misacylated Cys-tRNA(Pro) is not edited by ProRS. This is Proline--tRNA ligase from Mycobacterium avium (strain 104).